A 350-amino-acid chain; its full sequence is Quinone oxidoreductase-like protein 2 (350 aa).

Position 36 is an N6-acetyllysine (Lys-36). Lys-201 is subject to N6-succinyllysine. 2 positions are modified to N6-acetyllysine: Lys-302 and Lys-328.

The protein belongs to the zinc-containing alcohol dehydrogenase family. Quinone oxidoreductase subfamily.

The sequence is that of Quinone oxidoreductase-like protein 2 from Mus musculus (Mouse).